The following is a 416-amino-acid chain: Glutamyl-tRNA reductase (416 aa).

Substrate contacts are provided by residues 49–52, Ser-105, 110–112, and Gln-116; these read TCNR and EPQ. Cys-50 acts as the Nucleophile in catalysis. Position 185 to 190 (185 to 190) interacts with NADP(+); the sequence is GAGETI.

It belongs to the glutamyl-tRNA reductase family. Homodimer.

It carries out the reaction (S)-4-amino-5-oxopentanoate + tRNA(Glu) + NADP(+) = L-glutamyl-tRNA(Glu) + NADPH + H(+). Its pathway is porphyrin-containing compound metabolism; protoporphyrin-IX biosynthesis; 5-aminolevulinate from L-glutamyl-tRNA(Glu): step 1/2. Catalyzes the NADPH-dependent reduction of glutamyl-tRNA(Glu) to glutamate 1-semialdehyde (GSA). In Shewanella amazonensis (strain ATCC BAA-1098 / SB2B), this protein is Glutamyl-tRNA reductase.